Reading from the N-terminus, the 193-residue chain is ATP-dependent Clp protease proteolytic subunit 2 (193 aa).

Residue serine 98 is the Nucleophile of the active site. Histidine 123 is a catalytic residue.

It belongs to the peptidase S14 family. As to quaternary structure, fourteen ClpP subunits assemble into 2 heptameric rings which stack back to back to give a disk-like structure with a central cavity, resembling the structure of eukaryotic proteasomes.

Its subcellular location is the cytoplasm. The enzyme catalyses Hydrolysis of proteins to small peptides in the presence of ATP and magnesium. alpha-casein is the usual test substrate. In the absence of ATP, only oligopeptides shorter than five residues are hydrolyzed (such as succinyl-Leu-Tyr-|-NHMec, and Leu-Tyr-Leu-|-Tyr-Trp, in which cleavage of the -Tyr-|-Leu- and -Tyr-|-Trp bonds also occurs).. In terms of biological role, cleaves peptides in various proteins in a process that requires ATP hydrolysis. Has a chymotrypsin-like activity. Plays a major role in the degradation of misfolded proteins. The chain is ATP-dependent Clp protease proteolytic subunit 2 from Bacillus cereus (strain ATCC 10987 / NRS 248).